The chain runs to 503 residues: MSAASTTSTPAAAAVAPQQPESLYRVVQTLGEGAFGEVLLIVNTKNPEVAAAMKKINIANKSKDFIDNIRKEYLLQKRVSAVGHDNVIRMIGMRNDPQFYYLFLEYADGGELFDKIEPDCGMSPVFAQFYFKQLICGLKFIHDNDVVHRDIKPENLLLTGTHVLKISDFGMATLYRNKGEERLLDLSCGTIPYAAPELCAGKKYRGPPVDVWSSGIVLIAMLTGELPWDRASDASQSYMGWISNTSLDERPWKKIDVRALCMLRKIVTDKTDKRATIEQIQADPWYQHNFGQVETPNGRPLKRARNNDENITCTQQAECSAKRRHLETPNEKSTLAERQNASFSQPTKTEDLLLTQHIDMSQTNSNLLQRMVCRMTRFCVVTDIRSTYQKVARASEHAGFGVRETDDYRLLVTWREVSMMVSLYTMGDIPDKPRVMVDFRRSRGDGIQFKKMFMDVRNRMHEWICTDGNNWLANLGYVPRNPQIVNGGGVNVEHSASSINVDV.

A Protein kinase domain is found at 24-286; the sequence is YRVVQTLGEG…IEQIQADPWY (263 aa). ATP is bound by residues 30–38 and K54; that span reads LGEGAFGEV. The active-site Proton acceptor is D150. Residues 320–346 are disordered; sequence SAKRRHLETPNEKSTLAERQNASFSQP. Over residues 331–346 the composition is skewed to polar residues; that stretch reads EKSTLAERQNASFSQP. A Phosphoserine modification is found at S344.

It belongs to the protein kinase superfamily. CAMK Ser/Thr protein kinase family. NIM1 subfamily. As to expression, expressed in the germline.

Its subcellular location is the cytoplasm. It localises to the nucleus. It is found in the perinuclear region. It catalyses the reaction L-seryl-[protein] + ATP = O-phospho-L-seryl-[protein] + ADP + H(+). The catalysed reaction is L-threonyl-[protein] + ATP = O-phospho-L-threonyl-[protein] + ADP + H(+). Serine/threonine-protein kinase which is required for checkpoint-mediated cell cycle arrest and activation of DNA repair in response to the presence of DNA damage or unreplicated DNA. May also negatively regulate cell cycle progression during unperturbed cell cycles. Required for checkpoint mediated cell cycle arrest in response to DNA damage in germline cells. Delays cell-cycle reentry of the Z2 and Z3 primordial germ cells in response to transcription-induced DNA damage as they emerge from cell cycle arrest in L1 larvae. Essential for embryogenesis. The protein is Serine/threonine-protein kinase chk-1 of Caenorhabditis elegans.